The sequence spans 302 residues: MSEDVVTQPPANLVAGVVKAIRPRQWVKNVLVLAAPLAALGGGVRYDYVEVLSKVSMAFVVFSLAASAVYLVNDVRDVEADREHPTKRFRPIAAGVVPEWLAYTVAVVLGVTSLAGAWMLTPNLALVMVVYLAMQLAYCFGLKHQAVVEICVVSSAYLIRAIAGGVATKIPLSKWFLLIMAFGSLFMVAGKRYAELHLAERTGAAIRKSLESYTSTYLRFVWTLSATAVVLCYGLWAFERDGYSGSWFAVSMIPFTIAILRYAVDVDGGLAGEPEDIALRDRVLQLLALAWIATVGAAVAFG.

Lysine 28 provides a ligand contact to 5-phospho-alpha-D-ribose 1-diphosphate. 2 helical membrane passes run 30-50 (VLVL…DYVE) and 55-75 (VSMA…VNDV). Position 70 (tyrosine 70) interacts with 5-phospho-alpha-D-ribose 1-diphosphate. Asparagine 73 and aspartate 77 together coordinate Mg(2+). Lysine 87 is a 5-phospho-alpha-D-ribose 1-diphosphate binding site. Transmembrane regions (helical) follow at residues 100-120 (WLAY…AWML) and 122-142 (PNLA…CFGL). 2 residues coordinate 5-phospho-alpha-D-ribose 1-diphosphate: lysine 143 and arginine 160. The next 2 membrane-spanning stretches (helical) occupy residues 146–166 (AVVE…AGGV) and 170–190 (IPLS…MVAG). Lysine 191 contributes to the trans,octa-cis-decaprenyl phosphate binding site. A run of 3 helical transmembrane segments spans residues 218–238 (LRFV…LWAF), 244–264 (SGSW…RYAV), and 282–302 (RVLQ…VAFG).

Belongs to the UbiA prenyltransferase family. DPPR synthase subfamily. As to quaternary structure, homotrimer. Mg(2+) serves as cofactor.

The protein localises to the cell inner membrane. The catalysed reaction is trans,octa-cis-decaprenyl phosphate + 5-phospho-alpha-D-ribose 1-diphosphate + H(+) = trans,octa-cis-decaprenylphospho-beta-D-ribofuranose 5-phosphate + diphosphate. Its pathway is cell wall biogenesis; cell wall polysaccharide biosynthesis. Functionally, involved in the biosynthesis of decaprenylphosphoryl arabinose (DPA) a precursor for arabinan synthesis in mycobacterial cell wall biosynthesis. Catalyzes the transfer of a 5-phosphoribosyl residue from phosphoribose diphosphate (PRPP) to decaprenyl phosphate (DP) to form decaprenylphosphoryl-5-phosphoribose (DPPR). This chain is Decaprenyl-phosphate phosphoribosyltransferase, found in Mycobacterium tuberculosis (strain CDC 1551 / Oshkosh).